Consider the following 465-residue polypeptide: 3-isopropylmalate dehydratase large subunit (465 aa).

[4Fe-4S] cluster is bound by residues Cys346, Cys406, and Cys409.

Belongs to the aconitase/IPM isomerase family. LeuC type 1 subfamily. As to quaternary structure, heterodimer of LeuC and LeuD. Requires [4Fe-4S] cluster as cofactor.

The catalysed reaction is (2R,3S)-3-isopropylmalate = (2S)-2-isopropylmalate. It participates in amino-acid biosynthesis; L-leucine biosynthesis; L-leucine from 3-methyl-2-oxobutanoate: step 2/4. Catalyzes the isomerization between 2-isopropylmalate and 3-isopropylmalate, via the formation of 2-isopropylmaleate. The polypeptide is 3-isopropylmalate dehydratase large subunit (Psychromonas ingrahamii (strain DSM 17664 / CCUG 51855 / 37)).